A 307-amino-acid chain; its full sequence is uncharacterized protein (307 aa).

This is an uncharacterized protein from Saccharum officinarum (Sugarcane).